The chain runs to 113 residues: Meiotically up-regulated gene 98 protein, mitochondrial (113 aa).

Its subcellular location is the mitochondrion. Functionally, has a role in meiosis. The polypeptide is Meiotically up-regulated gene 98 protein, mitochondrial (mug98) (Schizosaccharomyces pombe (strain 972 / ATCC 24843) (Fission yeast)).